Reading from the N-terminus, the 207-residue chain is Chloramphenicol acetyltransferase (207 aa).

The active-site Proton acceptor is the His186.

It belongs to the chloramphenicol acetyltransferase family. In terms of assembly, homotrimer.

It carries out the reaction chloramphenicol + acetyl-CoA = chloramphenicol 3-acetate + CoA. Functionally, this enzyme is an effector of chloramphenicol resistance in bacteria. This chain is Chloramphenicol acetyltransferase (catP), found in Clostridium perfringens.